Here is a 254-residue protein sequence, read N- to C-terminus: Nickel import ATP-binding protein NikD (254 aa).

Residues 2-241 enclose the ABC transporter domain; the sequence is PQQIELRNIA…PKHTVTRSLV (240 aa). 36-43 serves as a coordination point for ATP; that stretch reads GGSGSGKS.

The protein belongs to the ABC transporter superfamily. Nickel importer (TC 3.A.1.5.3) family. As to quaternary structure, the complex is composed of two ATP-binding proteins (NikD and NikE), two transmembrane proteins (NikB and NikC) and a solute-binding protein (NikA).

It localises to the cell inner membrane. The catalysed reaction is Ni(2+)(out) + ATP + H2O = Ni(2+)(in) + ADP + phosphate + H(+). Part of the ABC transporter complex NikABCDE involved in nickel import. Responsible for energy coupling to the transport system. The sequence is that of Nickel import ATP-binding protein NikD from Shigella boydii serotype 4 (strain Sb227).